The primary structure comprises 84 residues: Small ribosomal subunit protein uS17 (84 aa).

This sequence belongs to the universal ribosomal protein uS17 family. Part of the 30S ribosomal subunit.

In terms of biological role, one of the primary rRNA binding proteins, it binds specifically to the 5'-end of 16S ribosomal RNA. The polypeptide is Small ribosomal subunit protein uS17 (Clostridium perfringens (strain ATCC 13124 / DSM 756 / JCM 1290 / NCIMB 6125 / NCTC 8237 / Type A)).